The primary structure comprises 289 residues: Xyloglucan endotransglucosylase/hydrolase protein 15 (289 aa).

The N-terminal stretch at 1–25 (MGPSSSLTTIVATVLLVTLFGSAYA) is a signal peptide. A GH16 domain is found at 26–216 (SNFFDEFDLT…WSKAPFTAYY (191 aa)). Glu-102 functions as the Nucleophile in the catalytic mechanism. Glu-106 functions as the Proton donor in the catalytic mechanism. Glu-106 contributes to the xyloglucan binding site. A glycan (N-linked (GlcNAc...) asparagine) is linked at Asn-110. Xyloglucan is bound by residues 119–121 (HTN), 129–131 (DRE), 195–196 (DW), and Gly-200. 2 disulfides stabilise this stretch: Cys-224/Cys-230 and Cys-270/Cys-284. Arg-275 is a binding site for xyloglucan.

This sequence belongs to the glycosyl hydrolase 16 family. XTH group 2 subfamily. In terms of processing, contains at least one intrachain disulfide bond essential for its enzymatic activity. In terms of tissue distribution, strongly expressed in roots, hypocotyls and cotyledons. Aslo detected in inflorescence stems and in the carpels and styles in flowers.

It localises to the secreted. Its subcellular location is the cell wall. The protein resides in the extracellular space. It is found in the apoplast. The enzyme catalyses breaks a beta-(1-&gt;4) bond in the backbone of a xyloglucan and transfers the xyloglucanyl segment on to O-4 of the non-reducing terminal glucose residue of an acceptor, which can be a xyloglucan or an oligosaccharide of xyloglucan.. It catalyses the reaction xyloglucan + H2O = xyloglucan oligosaccharides.. Its function is as follows. Catalyzes xyloglucan endohydrolysis (XEH) and/or endotransglycosylation (XET). Cleaves and religates xyloglucan polymers, an essential constituent of the primary cell wall, and thereby participates in cell wall construction of growing tissues. Has a high XET activity, but little or no XEH activity in vitro. Acceptor preferences are XXXGol &gt; XLLGol = XLFGol &gt; XXLGol &gt; XXFGol. This Arabidopsis thaliana (Mouse-ear cress) protein is Xyloglucan endotransglucosylase/hydrolase protein 15.